The chain runs to 440 residues: Platelet-activating factor acetylhydrolase (440 aa).

Positions 1–21 (MVPLKLQALFCLLCCLPWVHP) are cleaved as a signal peptide. 3 N-linked (GlcNAc...) asparagine glycosylation sites follow: N59, N75, and N199. Residue S272 is the Nucleophile of the active site. Active-site charge relay system residues include D295 and H350.

It belongs to the AB hydrolase superfamily. Lipase family. In terms of processing, N-glycosylated. As to expression, plasma.

The protein resides in the secreted. Its subcellular location is the extracellular space. It carries out the reaction a 1-O-alkyl-2-acetyl-sn-glycero-3-phosphocholine + H2O = a 1-O-alkyl-sn-glycero-3-phosphocholine + acetate + H(+). The catalysed reaction is 1-O-decyl-2-acetyl-sn-glycero-3-phosphocholine + H2O = 1-O-decyl-sn-glycero-3-phosphocholine + acetate + H(+). It catalyses the reaction 1-O-dodecyl-2-acetyl-sn-glycero-3-phosphocholine + H2O = 1-O-dodecyl-sn-glycero-3-phosphocholine + acetate + H(+). The enzyme catalyses 1-O-tetradecyl-2-acetyl-sn-glycero-3-phosphocholine + H2O = 1-O-tetradecyl-sn-glycero-3-phosphocholine + acetate + H(+). It carries out the reaction 1-O-hexadecyl-2-acetyl-sn-glycero-3-phosphocholine + H2O = 1-O-hexadecyl-sn-glycero-3-phosphocholine + acetate + H(+). The catalysed reaction is 1-O-octadecyl-2-acetyl-sn-glycero-3-phosphocholine + H2O = 1-O-octadecyl-sn-glycero-3-phosphocholine + acetate + H(+). It catalyses the reaction 1-hexadecanoyl-2-acetyl-sn-glycero-3-phosphocholine + H2O = 1-hexadecanoyl-sn-glycero-3-phosphocholine + acetate + H(+). The enzyme catalyses 1-hexadecanoyl-2-propionyl-sn-glycero-3-phosphocholine + H2O = propanoate + 1-hexadecanoyl-sn-glycero-3-phosphocholine + H(+). It carries out the reaction 1-hexadecanoyl-2-butanoyl-sn-glycero-3-phosphocholine + H2O = butanoate + 1-hexadecanoyl-sn-glycero-3-phosphocholine + H(+). The catalysed reaction is 1-hexadecanoyl-2-pentanoyl-sn-glycero-3-phosphocholine + H2O = pentanoate + 1-hexadecanoyl-sn-glycero-3-phosphocholine + H(+). It catalyses the reaction 1-hexadecanoyl-2-glutaroyl-sn-glycero-3-phosphocholine + H2O = glutarate + 1-hexadecanoyl-sn-glycero-3-phosphocholine + H(+). The enzyme catalyses 1-hexadecanoyl-2-(5-oxopentanoyl)-sn-glycero-3-phosphocholine + H2O = 5-oxopentanoate + 1-hexadecanoyl-sn-glycero-3-phosphocholine + H(+). It carries out the reaction 1-hexadecanoyl-2-(9-oxononanoyl)-sn-glycero-3-phosphocholine + H2O = 9-oxononanoate + 1-hexadecanoyl-sn-glycero-3-phosphocholine + H(+). The catalysed reaction is 1-hexadecanoyl-2-[9-hydroperoxy-(10E-octadecenoyl)]-sn-glycero-3-phosphocholine + H2O = 9-hydroperoxy-10E-octadecenoate + 1-hexadecanoyl-sn-glycero-3-phosphocholine + H(+). It catalyses the reaction 1-hexadecanoyl-2-(10-hydroperoxy-8E-octadecenoyl)-sn-glycero-3-phosphocholine + H2O = 10-hydroperoxy-(8E)-octadecenoate + 1-hexadecanoyl-sn-glycero-3-phosphocholine + H(+). Functionally, lipoprotein-associated calcium-independent phospholipase A2 involved in phospholipid catabolism during inflammatory and oxidative stress response. At the lipid-aqueous interface, hydrolyzes the ester bond of fatty acyl group attached at sn-2 position of phospholipids (phospholipase A2 activity). Specifically targets phospholipids with a short-chain fatty acyl group at sn-2 position. Can hydrolyze phospholipids with long fatty acyl chains, only if they carry oxidized functional groups. Hydrolyzes and inactivates platelet-activating factor (PAF, 1-O-alkyl-2-acetyl-sn-glycero-3-phosphocholine), a potent pro-inflammatory signaling lipid that acts through PTAFR on various innate immune cells. Hydrolyzes oxidatively truncated phospholipids carrying an aldehyde group at omega position, preventing their accumulation in lipoprotein particles and uncontrolled pro-inflammatory effects. As part of high-density lipoprotein (HDL) particles, can hydrolyze phospholipids having long-chain fatty acyl hydroperoxides at sn-2 position and protect against potential accumulation of these oxylipins in the vascular wall. Catalyzes the release from membrane phospholipids of F2-isoprostanes, lipid biomarkers of cellular oxidative damage. In Mus musculus (Mouse), this protein is Platelet-activating factor acetylhydrolase (Pla2g7).